The following is a 353-amino-acid chain: Interferon-stimulated 20 kDa exonuclease-like 2 (353 aa).

Disordered regions lie at residues 1–93 (MSTL…QPLD) and 125–172 (ALPK…SGAS). Basic and acidic residues predominate over residues 14–23 (PPKKALEGNA). Over residues 24 to 35 (KHRNFVKKRRLL) the composition is skewed to basic residues. A compositionally biased stretch (basic and acidic residues) spans 54 to 63 (LHSEPSKKGE). Residues 135–151 (RSQKKSSQKKSSKKNHP) are compositionally biased toward basic residues. A compositionally biased stretch (polar residues) spans 152-172 (QKNAPQNSTQAHSENKCSGAS). The Exonuclease domain occupies 178–353 (KMVAIDCEMV…EHLARNPPTD (176 aa)).

It localises to the nucleus. The protein resides in the nucleolus. In terms of biological role, 3'-&gt; 5'-exoribonuclease involved in ribosome biogenesis in the processing of the 12S pre-rRNA. Displays a strong specificity for a 3'-end containing a free hydroxyl group. This is Interferon-stimulated 20 kDa exonuclease-like 2 (ISG20L2) from Homo sapiens (Human).